Consider the following 142-residue polypeptide: Large ribosomal subunit protein uL13 (142 aa).

It belongs to the universal ribosomal protein uL13 family. Part of the 50S ribosomal subunit.

In terms of biological role, this protein is one of the early assembly proteins of the 50S ribosomal subunit, although it is not seen to bind rRNA by itself. It is important during the early stages of 50S assembly. The polypeptide is Large ribosomal subunit protein uL13 (Alcanivorax borkumensis (strain ATCC 700651 / DSM 11573 / NCIMB 13689 / SK2)).